The following is a 429-amino-acid chain: Gamma-glutamyl phosphate reductase (429 aa).

This sequence belongs to the gamma-glutamyl phosphate reductase family.

It localises to the cytoplasm. It carries out the reaction L-glutamate 5-semialdehyde + phosphate + NADP(+) = L-glutamyl 5-phosphate + NADPH + H(+). It participates in amino-acid biosynthesis; L-proline biosynthesis; L-glutamate 5-semialdehyde from L-glutamate: step 2/2. Its function is as follows. Catalyzes the NADPH-dependent reduction of L-glutamate 5-phosphate into L-glutamate 5-semialdehyde and phosphate. The product spontaneously undergoes cyclization to form 1-pyrroline-5-carboxylate. The chain is Gamma-glutamyl phosphate reductase from Bradyrhizobium sp. (strain ORS 278).